The following is an 835-amino-acid chain: Phenylalanine--tRNA ligase beta subunit (835 aa).

In terms of domain architecture, tRNA-binding spans 44–158 (GPVDGPLTVG…LPGADGADVL (115 aa)). A B5 domain is found at 414 to 493 (WSLPPIRIAV…RLEGLEVIRS (80 aa)). Mg(2+) is bound by residues D471, D477, E480, and E481. In terms of domain architecture, FDX-ACB spans 741–834 (SPFPAVLQDV…AAERVGATLR (94 aa)).

This sequence belongs to the phenylalanyl-tRNA synthetase beta subunit family. Type 1 subfamily. In terms of assembly, tetramer of two alpha and two beta subunits. It depends on Mg(2+) as a cofactor.

It localises to the cytoplasm. The enzyme catalyses tRNA(Phe) + L-phenylalanine + ATP = L-phenylalanyl-tRNA(Phe) + AMP + diphosphate + H(+). In Mycobacterium leprae (strain TN), this protein is Phenylalanine--tRNA ligase beta subunit.